A 519-amino-acid polypeptide reads, in one-letter code: ATP synthase subunit alpha (519 aa).

174–181 (GDRQTGKT) contacts ATP.

It belongs to the ATPase alpha/beta chains family. In terms of assembly, F-type ATPases have 2 components, CF(1) - the catalytic core - and CF(0) - the membrane proton channel. CF(1) has five subunits: alpha(3), beta(3), gamma(1), delta(1), epsilon(1). CF(0) has three main subunits: a(1), b(2) and c(9-12). The alpha and beta chains form an alternating ring which encloses part of the gamma chain. CF(1) is attached to CF(0) by a central stalk formed by the gamma and epsilon chains, while a peripheral stalk is formed by the delta and b chains.

The protein resides in the cell inner membrane. The enzyme catalyses ATP + H2O + 4 H(+)(in) = ADP + phosphate + 5 H(+)(out). Functionally, produces ATP from ADP in the presence of a proton gradient across the membrane. The alpha chain is a regulatory subunit. The protein is ATP synthase subunit alpha of Paracidovorax citrulli (strain AAC00-1) (Acidovorax citrulli).